Reading from the N-terminus, the 290-residue chain is Ribosomal RNA small subunit methyltransferase A (290 aa).

Asn27, Leu29, Gly54, Glu75, Asp100, and Asn125 together coordinate S-adenosyl-L-methionine.

This sequence belongs to the class I-like SAM-binding methyltransferase superfamily. rRNA adenine N(6)-methyltransferase family. RsmA subfamily.

It is found in the cytoplasm. It carries out the reaction adenosine(1518)/adenosine(1519) in 16S rRNA + 4 S-adenosyl-L-methionine = N(6)-dimethyladenosine(1518)/N(6)-dimethyladenosine(1519) in 16S rRNA + 4 S-adenosyl-L-homocysteine + 4 H(+). Functionally, specifically dimethylates two adjacent adenosines (A1518 and A1519) in the loop of a conserved hairpin near the 3'-end of 16S rRNA in the 30S particle. May play a critical role in biogenesis of 30S subunits. This Streptococcus sanguinis (strain SK36) protein is Ribosomal RNA small subunit methyltransferase A.